The chain runs to 336 residues: UPF0324 membrane protein spr0034 (336 aa).

8 helical membrane passes run 65–84 (LLQY…QVFA), 91–113 (PVIL…FFAL), 118–140 (ATLV…APVI), 153–175 (VIFF…LHLS), 211–233 (SATI…LSYW), 249–271 (VFPL…TSLG), 286–305 (FLIV…VAMV), and 312–334 (ILLG…TLIG).

This sequence belongs to the UPF0324 family.

It is found in the cell membrane. This Streptococcus pneumoniae (strain ATCC BAA-255 / R6) protein is UPF0324 membrane protein spr0034.